The primary structure comprises 677 residues: Fermitin family homolog 1 (677 aa).

The 558-residue stretch at 96–653 (MLRLRLPNLK…HEYIGGYIFL (558 aa)) folds into the FERM domain. S170, S179, and S361 each carry phosphoserine. Residues 337–433 (ESEVDEIEAA…EVVPNVNVAE (97 aa)) enclose the PH domain.

Belongs to the kindlin family. In terms of assembly, interacts with the cytoplasmic domain of integrins ITGB1 and ITGB3.

It localises to the cytoplasm. Its subcellular location is the cytoskeleton. It is found in the cell junction. The protein resides in the focal adhesion. The protein localises to the cell projection. It localises to the ruffle membrane. Its function is as follows. Involved in cell adhesion. Contributes to integrin activation. When coexpressed with talin, potentiates activation of ITGA2B. Required for normal keratinocyte proliferation. Required for normal polarization of basal keratinocytes in skin, and for normal cell shape. Required for normal adhesion of keratinocytes to fibronectin and laminin, and for normal keratinocyte migration to wound sites. This Pongo abelii (Sumatran orangutan) protein is Fermitin family homolog 1 (FERMT1).